The following is a 323-amino-acid chain: Cyclin-H (323 aa).

Position 5 is a phosphoserine; by CDK8 (S5). S132 carries the phosphoserine modification. The tract at residues 297 to 323 is disordered; it reads YEDDDYVSKKSKHEEEEWTDDDLVESL. The segment covering 302 to 311 has biased composition (basic and acidic residues); that stretch reads YVSKKSKHEE. The residue at position 304 (S304) is a Phosphoserine; by CDK8. Acidic residues predominate over residues 312 to 323; the sequence is EEWTDDDLVESL. The residue at position 315 (T315) is a Phosphothreonine. The residue at position 322 (S322) is a Phosphoserine.

The protein belongs to the cyclin family. Cyclin C subfamily. As to quaternary structure, associates primarily with CDK7 and MAT1 to form the CAK complex. CAK can further associate with the core-TFIIH to form the TFIIH basal transcription factor.

The protein localises to the nucleus. Functionally, regulates CDK7, the catalytic subunit of the CDK-activating kinase (CAK) enzymatic complex. CAK activates the cyclin-associated kinases CDK1, CDK2, CDK4 and CDK6 by threonine phosphorylation. CAK complexed to the core-TFIIH basal transcription factor activates RNA polymerase II by serine phosphorylation of the repetitive C-terminal domain (CTD) of its large subunit (POLR2A), allowing its escape from the promoter and elongation of the transcripts. Involved in cell cycle control and in RNA transcription by RNA polymerase II. Its expression and activity are constant throughout the cell cycle. In Homo sapiens (Human), this protein is Cyclin-H (CCNH).